The following is a 177-amino-acid chain: uncharacterized protein (177 aa).

This sequence to B.subtilis YutG.

This is an uncharacterized protein from Bacillus subtilis (strain 168).